The sequence spans 191 residues: Guanylate kinase (191 aa).

One can recognise a Guanylate kinase-like domain in the interval 8–188 (GRLVVLAGPS…AVSDIKEILV (181 aa)). An ATP-binding site is contributed by 15–22 (GPSAVGKS).

This sequence belongs to the guanylate kinase family.

The protein localises to the cytoplasm. The enzyme catalyses GMP + ATP = GDP + ADP. Functionally, essential for recycling GMP and indirectly, cGMP. The protein is Guanylate kinase of Corynebacterium diphtheriae (strain ATCC 700971 / NCTC 13129 / Biotype gravis).